The following is a 182-amino-acid chain: Putative adenylate kinase (182 aa).

ATP contacts are provided by G10, G12, K13, T14, and S15. The NMP stretch occupies residues H30–A53. Residues A104–E114 are LID. Residues R105 and K143 each contribute to the ATP site.

This sequence belongs to the adenylate kinase family. AK6 subfamily. As to quaternary structure, interacts with uS11. Not a structural component of 40S pre-ribosomes, but transiently interacts with them by binding to uS11.

It carries out the reaction AMP + ATP = 2 ADP. The catalysed reaction is ATP + H2O = ADP + phosphate + H(+). Functionally, broad-specificity nucleoside monophosphate (NMP) kinase that catalyzes the reversible transfer of the terminal phosphate group between nucleoside triphosphates and monophosphates. Also has ATPase activity. Involved in the late maturation steps of the 30S ribosomal particles, specifically 16S rRNA maturation. While NMP activity is not required for ribosome maturation, ATPase activity is. Associates transiently with small ribosomal subunit protein uS11. ATP hydrolysis breaks the interaction with uS11. May temporarily remove uS11 from the ribosome to enable a conformational change of the ribosomal RNA that is needed for the final maturation step of the small ribosomal subunit. The protein is Putative adenylate kinase of Methanosarcina barkeri (strain Fusaro / DSM 804).